Here is a 406-residue protein sequence, read N- to C-terminus: 8-amino-7-oxononanoate synthase (406 aa).

Arginine 21 contacts substrate. 112 to 113 (GY) lines the pyridoxal 5'-phosphate pocket. Histidine 137 is a substrate binding site. Residues serine 183, histidine 211, and threonine 239 each coordinate pyridoxal 5'-phosphate. Residue lysine 242 is modified to N6-(pyridoxal phosphate)lysine. Threonine 358 lines the substrate pocket.

This sequence belongs to the class-II pyridoxal-phosphate-dependent aminotransferase family. BioF subfamily. As to quaternary structure, homodimer. Pyridoxal 5'-phosphate serves as cofactor.

It carries out the reaction 6-carboxyhexanoyl-[ACP] + L-alanine + H(+) = (8S)-8-amino-7-oxononanoate + holo-[ACP] + CO2. It participates in cofactor biosynthesis; biotin biosynthesis. Its function is as follows. Catalyzes the decarboxylative condensation of pimeloyl-[acyl-carrier protein] and L-alanine to produce 8-amino-7-oxononanoate (AON), [acyl-carrier protein], and carbon dioxide. The sequence is that of 8-amino-7-oxononanoate synthase from Burkholderia cenocepacia (strain HI2424).